Reading from the N-terminus, the 282-residue chain is 4-hydroxy-tetrahydrodipicolinate reductase (282 aa).

12–17 (GVTGRM) contacts NAD(+). Residue arginine 44 coordinates NADP(+). NAD(+)-binding positions include 107-109 (GTT) and 131-134 (SSNF). Histidine 164 (proton donor/acceptor) is an active-site residue. Position 165 (histidine 165) interacts with (S)-2,3,4,5-tetrahydrodipicolinate. The active-site Proton donor is the lysine 168. Residue 174–175 (GT) participates in (S)-2,3,4,5-tetrahydrodipicolinate binding.

The protein belongs to the DapB family. As to quaternary structure, homotetramer.

It is found in the cytoplasm. It catalyses the reaction (S)-2,3,4,5-tetrahydrodipicolinate + NAD(+) + H2O = (2S,4S)-4-hydroxy-2,3,4,5-tetrahydrodipicolinate + NADH + H(+). It carries out the reaction (S)-2,3,4,5-tetrahydrodipicolinate + NADP(+) + H2O = (2S,4S)-4-hydroxy-2,3,4,5-tetrahydrodipicolinate + NADPH + H(+). The protein operates within amino-acid biosynthesis; L-lysine biosynthesis via DAP pathway; (S)-tetrahydrodipicolinate from L-aspartate: step 4/4. Functionally, catalyzes the conversion of 4-hydroxy-tetrahydrodipicolinate (HTPA) to tetrahydrodipicolinate. This Blochmanniella pennsylvanica (strain BPEN) protein is 4-hydroxy-tetrahydrodipicolinate reductase.